The chain runs to 348 residues: Nuclear receptor subfamily 1 group I member 3 (348 aa).

Positions 8–83 (LRNCVVCGDQ…AGMRKDMILS (76 aa)) form a DNA-binding region, nuclear receptor. The NR C4-type zinc finger occupies 11–31 (CVVCGDQATGYHFNALTCEGC). At Thr-38 the chain carries Phosphothreonine; by PKC. Residues 47-71 (CPFAGSCEVSKTQRRHCPACRLQKC) form an NR C4-type zinc finger. An NR LBD domain is found at 109 to 348 (EQEELIRTLL…MMPLLQEICS (240 aa)).

Belongs to the nuclear hormone receptor family. NR1 subfamily. As to quaternary structure, heterodimer of NR1I3 and RXR. Interacts with PSMC4. Interacts with ECT2. Directly interacts with DNAJC7; this complex may also include HSP90. Interacts with CRY1. Interacts with CRY2 in a ligand-dependent manner. In terms of processing, phosphorylated at Thr-38 by PKC, dephosphorylation of Thr-38 is required for nuclear translocation and activation.

It is found in the nucleus. The protein resides in the cytoplasm. It localises to the cytoskeleton. Binds and transactivates the retinoic acid response elements that control expression of the retinoic acid receptor beta 2 and alcohol dehydrogenase 3 genes. Transactivates both the phenobarbital responsive element module of the human CYP2B6 gene and the CYP3A4 xenobiotic response element. The polypeptide is Nuclear receptor subfamily 1 group I member 3 (NR1I3) (Pan troglodytes (Chimpanzee)).